Here is a 681-residue protein sequence, read N- to C-terminus: SRSF protein kinase 2 (681 aa).

The tract at residues 1 to 63 (MSVNSEKSSS…EQEDPADYCK (63 aa)) is disordered. Residues 22-41 (LVPPPPPPPPPPPLPDPAPP) are compositionally biased toward pro residues. Acidic residues predominate over residues 42 to 59 (EPEEEILGSDDEEQEDPA). Phosphoserine is present on Ser50. The Protein kinase domain maps to 79–681 (YHVIRKLGWG…ECLRHPWLNS (603 aa)). ATP-binding positions include 85–93 (LGWGHFSTV) and Lys108. Asp212 functions as the Proton acceptor in the catalytic mechanism. 3 disordered regions span residues 237 to 270 (WQKA…KKKL), 302 to 452 (ENIT…PLFS), and 467 to 499 (GSPL…KTKT). Phosphothreonine is present on residues Thr331 and Thr332. A Phosphoserine modification is found at Ser378. Acidic residues predominate over residues 395–419 (QLEDEEDDEDDCANPEEYNLDEPNA). The segment covering 421–431 (SDYTYSSSYEQ) has biased composition (polar residues). Ser468 is subject to Phosphoserine. Thr471 is modified (phosphothreonine). Phosphoserine occurs at positions 477, 479, and 483. Phosphothreonine; by PKB/AKT1 is present on Thr485. Phosphoserine is present on residues Ser487 and Ser490. Ser581 is subject to Phosphoserine; by CK2.

Belongs to the protein kinase superfamily. CMGC Ser/Thr protein kinase family. In terms of assembly, associates with U4/U6-U5 tri-small nuclear ribonucleoproteins (U4/U6-U5 tri-snRNPs). Interacts with PKB/AKT1 in a phosphorylation-dependent manner. The phosphorylated form (by PKB/AKT1) interacts with YWHAB and YWHAE. Interaction with YWHAB suppresses its cleavage by caspases and inhibits the release of its N-terminal pro-apoptotic fragment. Interacts with SFN. Interacts with ACIN1. Interacts with POLR2A/RNA polymerase II; the interaction occurs during the co-transcriptional formation of inappropriate R-loops. It depends on Mg(2+) as a cofactor. In terms of processing, phosphorylation at Thr-485 by PKB/AKT1 enhances its stimulatory activity in triggering cyclin-D1 (CCND1) expression and promoting apoptosis in neurons, which can be blocked by YWHAB. It also enhances its protein kinase activity toward ACIN1 and SRSF2, promotes its nuclear translocation and prevents its proteolytic cleavage. Proteolytically cleaved at Asp-137 and Asp-401 by caspase-3 during apoptotic cell death. Cleavage at Asp-137 which is the major site of cleavage, produces a small N-terminal fragment that translocates into nucleus and promotes VP16-induced apoptosis. In terms of tissue distribution, expressed in testes, lung and brain.

The protein localises to the cytoplasm. The protein resides in the nucleus. It is found in the nucleoplasm. Its subcellular location is the nucleus speckle. It localises to the chromosome. The catalysed reaction is L-seryl-[protein] + ATP = O-phospho-L-seryl-[protein] + ADP + H(+). The enzyme catalyses L-threonyl-[protein] + ATP = O-phospho-L-threonyl-[protein] + ADP + H(+). Activated by phosphorylation on Ser-50 and Ser-581. In terms of biological role, serine/arginine-rich protein-specific kinase which specifically phosphorylates its substrates at serine residues located in regions rich in arginine/serine dipeptides, known as RS domains and is involved in the phosphorylation of SR splicing factors and the regulation of splicing. Promotes neuronal apoptosis by up-regulating cyclin-D1 (CCND1) expression. This is done by the phosphorylation of SRSF2, leading to the suppression of p53/TP53 phosphorylation thereby relieving the repressive effect of p53/TP53 on cyclin-D1 (CCND1) expression. Phosphorylates ACIN1, and redistributes it from the nuclear speckles to the nucleoplasm, resulting in cyclin A1 but not cyclin A2 up-regulation. Plays an essential role in spliceosomal B complex formation via the phosphorylation of DDX23/PRP28. Probably by phosphorylating DDX23, leads to the suppression of incorrect R-loops formed during transcription; R-loops are composed of a DNA:RNA hybrid and the associated non-template single-stranded DNA. This Mus musculus (Mouse) protein is SRSF protein kinase 2.